Reading from the N-terminus, the 362-residue chain is Phosphoserine aminotransferase (362 aa).

2 residues coordinate L-glutamate: Ser9 and Arg42. Residues 76 to 77 (GR), Trp102, Thr153, Asp174, and Gln197 each bind pyridoxal 5'-phosphate. N6-(pyridoxal phosphate)lysine is present on Lys198. 239–240 (NT) contributes to the pyridoxal 5'-phosphate binding site.

It belongs to the class-V pyridoxal-phosphate-dependent aminotransferase family. SerC subfamily. As to quaternary structure, homodimer. Pyridoxal 5'-phosphate serves as cofactor.

Its subcellular location is the cytoplasm. The catalysed reaction is O-phospho-L-serine + 2-oxoglutarate = 3-phosphooxypyruvate + L-glutamate. It carries out the reaction 4-(phosphooxy)-L-threonine + 2-oxoglutarate = (R)-3-hydroxy-2-oxo-4-phosphooxybutanoate + L-glutamate. It functions in the pathway amino-acid biosynthesis; L-serine biosynthesis; L-serine from 3-phospho-D-glycerate: step 2/3. It participates in cofactor biosynthesis; pyridoxine 5'-phosphate biosynthesis; pyridoxine 5'-phosphate from D-erythrose 4-phosphate: step 3/5. Catalyzes the reversible conversion of 3-phosphohydroxypyruvate to phosphoserine and of 3-hydroxy-2-oxo-4-phosphonooxybutanoate to phosphohydroxythreonine. This chain is Phosphoserine aminotransferase, found in Shigella dysenteriae serotype 1 (strain Sd197).